The chain runs to 373 residues: Bilirubin reductase (373 aa).

Q92 contacts FMN. R168 functions as the Proton donor in the catalytic mechanism. Residue K215 coordinates FMN. C344, C347, C351, and C363 together coordinate [4Fe-4S] cluster.

This sequence belongs to the NADH:flavin oxidoreductase/NADH oxidase family. FMN serves as cofactor. The cofactor is [4Fe-4S] cluster.

The catalysed reaction is urobilinogen + 4 A = (4Z,15Z)-bilirubin IXalpha + 4 AH2. It catalyses the reaction urobilinogen + 2 A = (4Z,15Z)-mesobilirubin IXalpha + 2 AH2. The protein operates within porphyrin-containing compound metabolism; protoheme degradation. Bilirubin reductase that catalyzes reduction of mesobilirubin and/or bilirubin to urobilinogen, a key step during heme degradation. Cooperates with BilS, which is probably involved in electron transfer for BilR. Urobilinogen then spontaneously degrades into urobilin, which gives urine its distinctive yellow color. The sequence is that of Bilirubin reductase from Clostridium symbiosum (strain WAL-14163).